A 398-amino-acid polypeptide reads, in one-letter code: Elongation factor Tu (398 aa).

Residues 10 to 207 (KPHVNIGTIG…TVDEYIPEPE (198 aa)) enclose the tr-type G domain. Residues 19–26 (GHVDHGKT) are G1. 19–26 (GHVDHGKT) serves as a coordination point for GTP. T26 serves as a coordination point for Mg(2+). Residues 63–67 (GITIN) form a G2 region. The tract at residues 84–87 (DAPG) is G3. GTP contacts are provided by residues 84-88 (DAPGH) and 139-142 (NKVD). The tract at residues 139–142 (NKVD) is G4. The interval 177-179 (SAL) is G5.

Belongs to the TRAFAC class translation factor GTPase superfamily. Classic translation factor GTPase family. EF-Tu/EF-1A subfamily. As to quaternary structure, monomer.

Its subcellular location is the cytoplasm. The catalysed reaction is GTP + H2O = GDP + phosphate + H(+). Functionally, GTP hydrolase that promotes the GTP-dependent binding of aminoacyl-tRNA to the A-site of ribosomes during protein biosynthesis. In Streptococcus agalactiae serotype V (strain ATCC BAA-611 / 2603 V/R), this protein is Elongation factor Tu.